Here is a 349-residue protein sequence, read N- to C-terminus: Isopentenyl-diphosphate delta-isomerase (349 aa).

9–10 (RK) is a binding site for substrate. Residues 65–67 (AMT), S95, and N124 each bind FMN. 95-97 (STH) contacts substrate. Q154 is a substrate binding site. E155 serves as a coordination point for Mg(2+). Residues K186, S211, T216, 262–264 (GVR), and 283–284 (SR) contribute to the FMN site.

The protein belongs to the IPP isomerase type 2 family. As to quaternary structure, homooctamer. Dimer of tetramers. It depends on FMN as a cofactor. Requires NADPH as cofactor. The cofactor is Mg(2+).

The protein resides in the cytoplasm. It carries out the reaction isopentenyl diphosphate = dimethylallyl diphosphate. Its function is as follows. Involved in the biosynthesis of isoprenoids. Catalyzes the 1,3-allylic rearrangement of the homoallylic substrate isopentenyl (IPP) to its allylic isomer, dimethylallyl diphosphate (DMAPP). This chain is Isopentenyl-diphosphate delta-isomerase, found in Staphylococcus haemolyticus (strain JCSC1435).